The sequence spans 89 residues: UPF0223 protein BCE_4008 (89 aa).

This sequence belongs to the UPF0223 family.

The protein is UPF0223 protein BCE_4008 of Bacillus cereus (strain ATCC 10987 / NRS 248).